Consider the following 375-residue polypeptide: Fructose-1,6-bisphosphate aldolase/phosphatase (375 aa).

D15 (proton acceptor; for FBP phosphatase activity) is an active-site residue. Residues D15, H22, D56, and D57 each contribute to the Mg(2+) site. Position 22 (H22) interacts with beta-D-fructose 1,6-bisphosphate. Residue H22 coordinates dihydroxyacetone phosphate. A beta-D-fructose 1,6-bisphosphate-binding site is contributed by Y94. Q98 provides a ligand contact to Mg(2+). Residue 107–108 participates in beta-D-fructose 1,6-bisphosphate binding; sequence GN. D135 is a binding site for Mg(2+). Position 136 (K136) interacts with beta-D-fructose 1,6-bisphosphate. A dihydroxyacetone phosphate-binding site is contributed by K136. Y237 acts as the Proton donor/acceptor; for FBP aldolase activity in catalysis. Mg(2+) contacts are provided by K240, D241, and D242. The active-site Schiff-base intermediate with DHAP; for FBP aldolase activity is the K240. Residues 250-251, R274, D295, and Y357 each bind beta-D-fructose 1,6-bisphosphate; that span reads QS. R274 and D295 together coordinate dihydroxyacetone phosphate.

Belongs to the FBP aldolase/phosphatase family. Homooctamer; dimer of tetramers. Requires Mg(2+) as cofactor.

It carries out the reaction beta-D-fructose 1,6-bisphosphate + H2O = beta-D-fructose 6-phosphate + phosphate. The catalysed reaction is beta-D-fructose 1,6-bisphosphate = D-glyceraldehyde 3-phosphate + dihydroxyacetone phosphate. It functions in the pathway carbohydrate biosynthesis; gluconeogenesis. With respect to regulation, activity is enhanced by dithioerythritol, and is slightly inhibited by fructose 2,6-bisphosphate. AMP does not inhibit the enzyme activity. Catalyzes two subsequent steps in gluconeogenesis: the aldol condensation of dihydroxyacetone phosphate (DHAP) and glyceraldehyde-3-phosphate (GA3P) to fructose-1,6-bisphosphate (FBP), and the dephosphorylation of FBP to fructose-6-phosphate (F6P). Does not display hydrolase activity against fructose 2,6-bisphosphate, fructose 6-phosphate, fructose 1-phosphate, glucose 6-phosphate, and glucose 1-phosphate. Exhibits only negligible activity on inositol-1-phosphate (IMP). Is essential for the growth of T.kodakaraensis under gluconeogenic conditions. The chain is Fructose-1,6-bisphosphate aldolase/phosphatase from Thermococcus kodakarensis (strain ATCC BAA-918 / JCM 12380 / KOD1) (Pyrococcus kodakaraensis (strain KOD1)).